The chain runs to 124 residues: Urotensin-2 (124 aa).

A signal peptide spans 1 to 20 (MYKLASCCLLFIGFLNPLLS). A propeptide spanning residues 21 to 110 (LPLLDSREIS…HLLARIWKPY (90 aa)) is cleaved from the precursor. Cys-118 and Cys-123 are disulfide-bonded.

Belongs to the urotensin-2 family. In terms of tissue distribution, brain specific.

The protein localises to the secreted. Highly potent vasoconstrictor. The protein is Urotensin-2 (UTS2) of Homo sapiens (Human).